We begin with the raw amino-acid sequence, 474 residues long: uncharacterized protein (474 aa).

Positions M1–L11 are enriched in acidic residues. The tract at residues M1–G163 is disordered. A compositionally biased stretch (basic and acidic residues) spans F12–E25. Residues A27 to T39 are compositionally biased toward polar residues. Basic and acidic residues predominate over residues K40–G76. A compositionally biased stretch (polar residues) spans N129–T140. RRM domains follow at residues G163–K245 and A247–P324. The tract at residues D412–R474 is disordered. Residues P425–S434 show a composition bias toward low complexity. Positions S435–P444 are enriched in gly residues.

It localises to the nucleus. This is an uncharacterized protein from Schizosaccharomyces pombe (strain 972 / ATCC 24843) (Fission yeast).